The sequence spans 277 residues: 3-methyl-2-oxobutanoate hydroxymethyltransferase (277 aa).

Residues D53 and D96 each coordinate Mg(2+). Residues 53–54, D96, and K126 each bind 3-methyl-2-oxobutanoate; that span reads DS. Position 128 (E128) interacts with Mg(2+). E195 acts as the Proton acceptor in catalysis.

It belongs to the PanB family. As to quaternary structure, homodecamer; pentamer of dimers. Requires Mg(2+) as cofactor.

The protein resides in the cytoplasm. The enzyme catalyses 3-methyl-2-oxobutanoate + (6R)-5,10-methylene-5,6,7,8-tetrahydrofolate + H2O = 2-dehydropantoate + (6S)-5,6,7,8-tetrahydrofolate. It functions in the pathway cofactor biosynthesis; (R)-pantothenate biosynthesis; (R)-pantoate from 3-methyl-2-oxobutanoate: step 1/2. Its function is as follows. Catalyzes the reversible reaction in which hydroxymethyl group from 5,10-methylenetetrahydrofolate is transferred onto alpha-ketoisovalerate to form ketopantoate. This chain is 3-methyl-2-oxobutanoate hydroxymethyltransferase, found in Pelodictyon phaeoclathratiforme (strain DSM 5477 / BU-1).